The following is a 358-amino-acid chain: Alanine racemase (358 aa).

Residue Lys35 is the Proton acceptor; specific for D-alanine of the active site. Lys35 is modified (N6-(pyridoxal phosphate)lysine). Residue Arg130 coordinates substrate. The active-site Proton acceptor; specific for L-alanine is the Tyr255. Substrate is bound at residue Met303.

The protein belongs to the alanine racemase family. Pyridoxal 5'-phosphate is required as a cofactor.

The catalysed reaction is L-alanine = D-alanine. Its pathway is amino-acid biosynthesis; D-alanine biosynthesis; D-alanine from L-alanine: step 1/1. In terms of biological role, catalyzes the interconversion of L-alanine and D-alanine. May also act on other amino acids. This Shewanella sp. (strain MR-4) protein is Alanine racemase (alr).